Reading from the N-terminus, the 621-residue chain is MSHHGPRLSTRSQQIVAGYASVAANFDVEKLHREQGVNIPTSGASINQCPHAAAARAAARMADDLASAARAKKSLDAKGSLAGRPVHHKAATESTKAKHTGFDYEAFYKGELAKKHQDKSYRYFNNINRLARKFPVAHTANPRDEVEVWCSNDYLGMGNNPVVLETMHRTLDKYGHGAGGTRNIAGNGAMHLGLERELRLHRKEAALVFSSCYVANDATLSTLGTKLPGCVIFSDTMNHASMIQGMRHSTPKRVIFKHNDLEDLETKLQQYPKETPKIIAFESVYSMCGSIGPVKEICDLAEQYGAITFLDEVHAVGLYGPRGAGVAEHLDYDAHLAAGSSPDPIPGSVMDRIDIITGTLGKSYGAVGGYIAGSEEFVDMIRSYAPGFIFTTSLPPATVAGARASIVYQSEYLGDRQLKQINVREVKRRLAELDIPVVPGSSHIVPVLVGDAALARAASDKLLSEHDIYVQAINYPTVARGEERLRITVTPRHTMEQMEGLIRSLNQVFEELNINRLSDWKLAGGRAGVGIPGAADDVQPIWTDEQIGLLNGTAPRSLRNAEKSVVDMRAVTIARSRFDVLLGPVYGELQPTEDFDTPAVGATFKAPLVDREVAHDITVSA.

The segment at 76–95 is disordered; that stretch reads DAKGSLAGRPVHHKAATEST. The substrate site is built by arginine 122 and serine 234. The pyridoxal 5'-phosphate site is built by serine 286, histidine 314, and threonine 359. Lysine 362 is a catalytic residue. Lysine 362 is modified (N6-(pyridoxal phosphate)lysine). Residues threonine 391 and threonine 392 each contribute to the pyridoxal 5'-phosphate site. A substrate-binding site is contributed by threonine 477.

Belongs to the class-II pyridoxal-phosphate-dependent aminotransferase family. In terms of assembly, homodimer. Requires pyridoxal 5'-phosphate as cofactor.

The protein localises to the mitochondrion matrix. The enzyme catalyses succinyl-CoA + glycine + H(+) = 5-aminolevulinate + CO2 + CoA. It functions in the pathway porphyrin-containing compound metabolism; protoporphyrin-IX biosynthesis; 5-aminolevulinate from glycine: step 1/1. Catalyzes the synthesis of 5-aminolevulinate (ALA) from succinyl-CoA and glycine, the first and rate-limiting step in heme biosynthesis. This is 5-aminolevulinate synthase, mitochondrial (hem1) from Agaricus bisporus (White button mushroom).